Consider the following 1011-residue polypeptide: Lysosomal alpha-mannosidase (1011 aa).

A signal peptide spans 1 to 49 (MGAYARASGVCARGCLDSAGPWTMSRALRPPLPPLCFFLLLLAAAGARA). 2 disulfides stabilise this stretch: C55-C358 and C268-C273. 2 residues coordinate Zn(2+): H72 and D74. N133 carries N-linked (GlcNAc...) asparagine glycosylation. D196 is a Zn(2+) binding site. Residue D196 is the Nucleophile of the active site. N310 and N367 each carry an N-linked (GlcNAc...) asparagine glycan. 2 cysteine pairs are disulfide-bonded: C412-C472 and C493-C501. H446 contacts Zn(2+). 8 N-linked (GlcNAc...) asparagine glycosylation sites follow: N497, N645, N651, N692, N766, N832, N930, and N989.

The protein belongs to the glycosyl hydrolase 38 family. Zn(2+) is required as a cofactor. In terms of processing, first processed into 3 peptides of 70 kDa, 42 kDa (D) and 13/15 kDa (E). The 70 kDa peptide is further processed into three peptides (A, B and C). The A, B and C peptides are disulfide-linked. Heavily glycosylated.

The protein localises to the lysosome. The enzyme catalyses Hydrolysis of terminal, non-reducing alpha-D-mannose residues in alpha-D-mannosides.. Functionally, necessary for the catabolism of N-linked carbohydrates released during glycoprotein turnover. Cleaves all known types of alpha-mannosidic linkages. This Homo sapiens (Human) protein is Lysosomal alpha-mannosidase (MAN2B1).